The chain runs to 258 residues: Ribosomal RNA small subunit methyltransferase A (258 aa).

S-adenosyl-L-methionine is bound by residues His-9, Leu-11, Gly-36, Glu-57, Asp-83, and Asn-102.

Belongs to the class I-like SAM-binding methyltransferase superfamily. rRNA adenine N(6)-methyltransferase family. RsmA subfamily.

It is found in the cytoplasm. The enzyme catalyses adenosine(1518)/adenosine(1519) in 16S rRNA + 4 S-adenosyl-L-methionine = N(6)-dimethyladenosine(1518)/N(6)-dimethyladenosine(1519) in 16S rRNA + 4 S-adenosyl-L-homocysteine + 4 H(+). Functionally, specifically dimethylates two adjacent adenosines (A1518 and A1519) in the loop of a conserved hairpin near the 3'-end of 16S rRNA in the 30S particle. May play a critical role in biogenesis of 30S subunits. The protein is Ribosomal RNA small subunit methyltransferase A of Caulobacter vibrioides (strain ATCC 19089 / CIP 103742 / CB 15) (Caulobacter crescentus).